A 157-amino-acid chain; its full sequence is Transcriptional regulator MraZ (157 aa).

SpoVT-AbrB domains lie at 7–54 and 83–126; these read TYEC…PMKE and VRII…DKDL.

Belongs to the MraZ family. Forms oligomers.

It is found in the cytoplasm. It localises to the nucleoid. The polypeptide is Transcriptional regulator MraZ (Flavobacterium psychrophilum (strain ATCC 49511 / DSM 21280 / CIP 103535 / JIP02/86)).